A 233-amino-acid chain; its full sequence is Large ribosomal subunit protein uL1 (233 aa).

Belongs to the universal ribosomal protein uL1 family. In terms of assembly, part of the 50S ribosomal subunit.

Binds directly to 23S rRNA. The L1 stalk is quite mobile in the ribosome, and is involved in E site tRNA release. Functionally, protein L1 is also a translational repressor protein, it controls the translation of the L11 operon by binding to its mRNA. This Pelobacter propionicus (strain DSM 2379 / NBRC 103807 / OttBd1) protein is Large ribosomal subunit protein uL1.